We begin with the raw amino-acid sequence, 254 residues long: Proteasome subunit alpha type-7 (254 aa).

O-linked (GlcNAc) serine glycosylation occurs at Ser136. The residue at position 159 (Tyr159) is a Phosphotyrosine. The residue at position 233 (Lys233) is an N6-acetyllysine.

This sequence belongs to the peptidase T1A family. The 26S proteasome consists of a 20S proteasome core and two 19S regulatory subunits. The 20S proteasome core is a barrel-shaped complex made of 28 subunits that are arranged in four stacked rings. The two outer rings are each formed by seven alpha subunits, and the two inner rings are formed by seven beta subunits. The proteolytic activity is exerted by three beta-subunits PSMB5, PSMB6 and PSMB7. PSMA7 interacts directly with the PSMG1-PSMG2 heterodimer which promotes 20S proteasome assembly. Interacts with HIF1A. Interacts with RAB7A. Interacts with PRKN. Interacts with ABL1 and ABL2. Interacts with EMAP2. Interacts with MAVS. As to expression, ubiquitous.

The protein localises to the cytoplasm. The protein resides in the nucleus. In terms of biological role, component of the 20S core proteasome complex involved in the proteolytic degradation of most intracellular proteins. This complex plays numerous essential roles within the cell by associating with different regulatory particles. Associated with two 19S regulatory particles, forms the 26S proteasome and thus participates in the ATP-dependent degradation of ubiquitinated proteins. The 26S proteasome plays a key role in the maintenance of protein homeostasis by removing misfolded or damaged proteins that could impair cellular functions, and by removing proteins whose functions are no longer required. Associated with the PA200 or PA28, the 20S proteasome mediates ubiquitin-independent protein degradation. This type of proteolysis is required in several pathways including spermatogenesis (20S-PA200 complex) or generation of a subset of MHC class I-presented antigenic peptides (20S-PA28 complex). Inhibits the transactivation function of HIF-1A under both normoxic and hypoxia-mimicking conditions. The interaction with EMAP2 increases the proteasome-mediated HIF-1A degradation under the hypoxic conditions. Plays a role in hepatitis C virus internal ribosome entry site-mediated translation. Mediates nuclear translocation of the androgen receptor (AR) and thereby enhances androgen-mediated transactivation. Promotes MAVS degradation and thereby negatively regulates MAVS-mediated innate immune response. The sequence is that of Proteasome subunit alpha type-7 (Psma7) from Rattus norvegicus (Rat).